We begin with the raw amino-acid sequence, 380 residues long: Cytochrome b (380 aa).

4 helical membrane passes run 34–54, 78–99, 114–134, and 179–199; these read FGSLLAVCLTTQILTGLLLAM, WLIRNLHANGASFFFICIFLHI, WNTGVILLLTLMATAFVGYVL, and FFALHFLLPFVITGITITHLM. Heme b is bound by residues histidine 84 and histidine 98. 2 residues coordinate heme b: histidine 183 and histidine 197. An a ubiquinone-binding site is contributed by histidine 202. The next 4 membrane-spanning stretches (helical) occupy residues 227–247, 289–309, 321–341, and 348–368; these read LKDILGLALMLTPFLTLALFS, LGGVLALAASVLILLLIPFLH, LSQALFWLLVANLLILTWVGS, and FIIIGQMASLSYFTILLILFP.

This sequence belongs to the cytochrome b family. The cytochrome bc1 complex contains 11 subunits: 3 respiratory subunits (MT-CYB, CYC1 and UQCRFS1), 2 core proteins (UQCRC1 and UQCRC2) and 6 low-molecular weight proteins (UQCRH/QCR6, UQCRB/QCR7, UQCRQ/QCR8, UQCR10/QCR9, UQCR11/QCR10 and a cleavage product of UQCRFS1). This cytochrome bc1 complex then forms a dimer. The cofactor is heme b.

Its subcellular location is the mitochondrion inner membrane. In terms of biological role, component of the ubiquinol-cytochrome c reductase complex (complex III or cytochrome b-c1 complex) that is part of the mitochondrial respiratory chain. The b-c1 complex mediates electron transfer from ubiquinol to cytochrome c. Contributes to the generation of a proton gradient across the mitochondrial membrane that is then used for ATP synthesis. This is Cytochrome b (MT-CYB) from Syrmaticus reevesii (Reeves's pheasant).